The primary structure comprises 338 residues: Protein pelota homolog (338 aa).

It belongs to the eukaryotic release factor 1 family. Pelota subfamily. In terms of assembly, monomer. It depends on a divalent metal cation as a cofactor.

The protein resides in the cytoplasm. Its function is as follows. May function in recognizing stalled ribosomes, interact with stem-loop structures in stalled mRNA molecules, and effect endonucleolytic cleavage of the mRNA. May play a role in the release non-functional ribosomes and degradation of damaged mRNAs. Has endoribonuclease activity. The sequence is that of Protein pelota homolog from Caldivirga maquilingensis (strain ATCC 700844 / DSM 13496 / JCM 10307 / IC-167).